The following is a 261-amino-acid chain: Transmembrane protein 106A (261 aa).

Residues 1 to 23 (MGKAVSQLTSRKDEDKPILPDNP) are disordered. A helical membrane pass occupies residues 93–113 (LFVFLSVAICLLIFSLTIFFL).

The protein belongs to the TMEM106 family. As to expression, expressed in liver, spleen, lung, kidney, lymph nodes and adipose tissue (at protein level). Expressed by macrophages.

It localises to the cell membrane. Activates macrophages and polarizes them into M1-like macrophages through the activation of the MAPK and NF-kappaB signaling pathway. Upon activation, up-regulates the expression of CD80, CD86, CD69 and MHC II on macrophages, and induces the release of pro-inflammatory cytokines such as TNF, IL1B, IL6, CCL2 and nitric oxide. May play a role in inhibition of proliferation and migration. The sequence is that of Transmembrane protein 106A (Tmem106a) from Mus musculus (Mouse).